The following is a 529-amino-acid chain: Glucose-6-phosphate isomerase (529 aa).

Glu-322 acts as the Proton donor in catalysis. Active-site residues include His-351 and Lys-455.

It belongs to the GPI family.

It is found in the cytoplasm. The catalysed reaction is alpha-D-glucose 6-phosphate = beta-D-fructose 6-phosphate. Its pathway is carbohydrate biosynthesis; gluconeogenesis. It functions in the pathway carbohydrate degradation; glycolysis; D-glyceraldehyde 3-phosphate and glycerone phosphate from D-glucose: step 2/4. Its function is as follows. Catalyzes the reversible isomerization of glucose-6-phosphate to fructose-6-phosphate. This chain is Glucose-6-phosphate isomerase, found in Acaryochloris marina (strain MBIC 11017).